We begin with the raw amino-acid sequence, 132 residues long: NADH-quinone oxidoreductase subunit A 2 (132 aa).

3 consecutive transmembrane segments (helical) span residues alanine 9–leucine 29, leucine 66–valine 86, and tryptophan 93–leucine 113.

Belongs to the complex I subunit 3 family. As to quaternary structure, NDH-1 is composed of 13 different subunits. Subunits NuoA, H, J, K, L, M, N constitute the membrane sector of the complex.

It localises to the cell inner membrane. The enzyme catalyses a quinone + NADH + 5 H(+)(in) = a quinol + NAD(+) + 4 H(+)(out). Functionally, NDH-1 shuttles electrons from NADH, via FMN and iron-sulfur (Fe-S) centers, to quinones in the respiratory chain. The immediate electron acceptor for the enzyme in this species is believed to be ubiquinone. Couples the redox reaction to proton translocation (for every two electrons transferred, four hydrogen ions are translocated across the cytoplasmic membrane), and thus conserves the redox energy in a proton gradient. The protein is NADH-quinone oxidoreductase subunit A 2 of Pseudomonas paraeruginosa (strain DSM 24068 / PA7) (Pseudomonas aeruginosa (strain PA7)).